The primary structure comprises 347 residues: 4-hydroxy-2-oxovalerate aldolase (347 aa).

One can recognise a Pyruvate carboxyltransferase domain in the interval 2–252 (ILISDATLRD…DTRTTFERVM (251 aa)). 10-11 (RD) contributes to the substrate binding site. Position 11 (aspartate 11) interacts with Mn(2+). The Proton acceptor role is filled by histidine 14. Positions 164 and 191 each coordinate substrate. Residues histidine 191 and histidine 193 each contribute to the Mn(2+) site.

This sequence belongs to the 4-hydroxy-2-oxovalerate aldolase family.

The catalysed reaction is (S)-4-hydroxy-2-oxopentanoate = acetaldehyde + pyruvate. The protein is 4-hydroxy-2-oxovalerate aldolase (mhpE) of Burkholderia pseudomallei (strain 1710b).